We begin with the raw amino-acid sequence, 59 residues long: Small ribosomal subunit protein bS21 (59 aa).

Residues 27-59 (GLMAEMRKREHYEKPSVRRKKKAQARNKKKRYA) form a disordered region. Residues 31 to 42 (EMRKREHYEKPS) are compositionally biased toward basic and acidic residues. Over residues 43 to 59 (VRRKKKAQARNKKKRYA) the composition is skewed to basic residues.

It belongs to the bacterial ribosomal protein bS21 family.

In Carboxydothermus hydrogenoformans (strain ATCC BAA-161 / DSM 6008 / Z-2901), this protein is Small ribosomal subunit protein bS21.